A 316-amino-acid chain; its full sequence is Ornithine carbamoyltransferase (316 aa).

Carbamoyl phosphate contacts are provided by residues 57 to 60, Q84, R108, and 135 to 138; these read STRT and HPCQ. Residues N166, D230, and 234–235 contribute to the L-ornithine site; that span reads SM. Residues 269 to 270 and R297 contribute to the carbamoyl phosphate site; that span reads CL.

This sequence belongs to the aspartate/ornithine carbamoyltransferase superfamily. OTCase family.

The protein resides in the cytoplasm. It catalyses the reaction carbamoyl phosphate + L-ornithine = L-citrulline + phosphate + H(+). It functions in the pathway amino-acid biosynthesis; L-arginine biosynthesis; L-arginine from L-ornithine and carbamoyl phosphate: step 1/3. Reversibly catalyzes the transfer of the carbamoyl group from carbamoyl phosphate (CP) to the N(epsilon) atom of ornithine (ORN) to produce L-citrulline. This chain is Ornithine carbamoyltransferase, found in Bacillus thuringiensis subsp. konkukian (strain 97-27).